We begin with the raw amino-acid sequence, 187 residues long: NAC domain-containing protein 104 (187 aa).

Residues 3–155 (LPPGFRFFPT…KWVICRVYEQ (153 aa)) enclose the NAC domain. A DNA-binding region spans residues 94–161 (VGIKKYLTFY…VYEQNCSEEE (68 aa)). Residues 118-142 (LPDSSSSSSRSSKRSSRASSSSHKP) are disordered.

In terms of tissue distribution, expressed in root xylem vessels. Expressed in stems, vascular tissue of cauline leaves and tracheary elements of sepals.

It localises to the nucleus. Probable transcription factor that influences tracheary elements and xylem development by negatively regulating secondary cell wall fiber synthesis and programmed cell death. This is NAC domain-containing protein 104 from Arabidopsis thaliana (Mouse-ear cress).